Here is a 544-residue protein sequence, read N- to C-terminus: Chaperonin GroEL (544 aa).

ATP is bound by residues 29 to 32 (TLGP), 86 to 90 (DGTTT), Gly413, 476 to 478 (NAA), and Asp492. The segment at 522–544 (PDPNANNNAAAGANPAAGMGGMM) is disordered. Positions 524–538 (PNANNNAAAGANPAA) are enriched in low complexity.

This sequence belongs to the chaperonin (HSP60) family. Forms a cylinder of 14 subunits composed of two heptameric rings stacked back-to-back. Interacts with the co-chaperonin GroES.

The protein resides in the cytoplasm. The catalysed reaction is ATP + H2O + a folded polypeptide = ADP + phosphate + an unfolded polypeptide.. In terms of biological role, together with its co-chaperonin GroES, plays an essential role in assisting protein folding. The GroEL-GroES system forms a nano-cage that allows encapsulation of the non-native substrate proteins and provides a physical environment optimized to promote and accelerate protein folding. In Lacticaseibacillus casei (strain BL23) (Lactobacillus casei), this protein is Chaperonin GroEL.